The chain runs to 463 residues: NADH-quinone oxidoreductase subunit N (463 aa).

14 helical membrane-spanning segments follow: residues 2-22 (NTLI…ILNF), 25-45 (GIVP…FYEF), 61-81 (FSTA…ALSH), 91-110 (ISDF…AMVS), 114-133 (LAMF…VLAA), 149-169 (FLMG…IYGA), 189-209 (IWFP…IAAV), 223-243 (PALT…ATLF), 264-284 (FTNV…IMAL), 292-312 (MLAF…LTIA), 317-337 (VLLY…SVIL), 362-382 (AAIL…SGFF), 395-415 (GYVA…GYYF), and 434-454 (PFLI…LGLF).

This sequence belongs to the complex I subunit 2 family. As to quaternary structure, NDH-1 is composed of 14 different subunits. Subunits NuoA, H, J, K, L, M, N constitute the membrane sector of the complex.

Its subcellular location is the cell inner membrane. The catalysed reaction is a quinone + NADH + 5 H(+)(in) = a quinol + NAD(+) + 4 H(+)(out). Functionally, NDH-1 shuttles electrons from NADH, via FMN and iron-sulfur (Fe-S) centers, to quinones in the respiratory chain. The immediate electron acceptor for the enzyme in this species is believed to be a menaquinone. Couples the redox reaction to proton translocation (for every two electrons transferred, four hydrogen ions are translocated across the cytoplasmic membrane), and thus conserves the redox energy in a proton gradient. This is NADH-quinone oxidoreductase subunit N from Flavobacterium johnsoniae (strain ATCC 17061 / DSM 2064 / JCM 8514 / BCRC 14874 / CCUG 350202 / NBRC 14942 / NCIMB 11054 / UW101) (Cytophaga johnsonae).